We begin with the raw amino-acid sequence, 975 residues long: Glycine dehydrogenase (decarboxylating) (975 aa).

K723 is modified (N6-(pyridoxal phosphate)lysine).

It belongs to the GcvP family. The glycine cleavage system is composed of four proteins: P, T, L and H. Pyridoxal 5'-phosphate serves as cofactor.

The enzyme catalyses N(6)-[(R)-lipoyl]-L-lysyl-[glycine-cleavage complex H protein] + glycine + H(+) = N(6)-[(R)-S(8)-aminomethyldihydrolipoyl]-L-lysyl-[glycine-cleavage complex H protein] + CO2. Its function is as follows. The glycine cleavage system catalyzes the degradation of glycine. The P protein binds the alpha-amino group of glycine through its pyridoxal phosphate cofactor; CO(2) is released and the remaining methylamine moiety is then transferred to the lipoamide cofactor of the H protein. The sequence is that of Glycine dehydrogenase (decarboxylating) from Burkholderia cenocepacia (strain HI2424).